Consider the following 327-residue polypeptide: Malate dehydrogenase (327 aa).

11–17 provides a ligand contact to NAD(+); the sequence is GAAGQIG. 2 residues coordinate substrate: arginine 92 and arginine 98. NAD(+)-binding positions include asparagine 105, glutamine 112, and 129–131; that span reads VGN. Substrate contacts are provided by asparagine 131 and arginine 162. Histidine 187 functions as the Proton acceptor in the catalytic mechanism.

Belongs to the LDH/MDH superfamily. MDH type 2 family.

The catalysed reaction is (S)-malate + NAD(+) = oxaloacetate + NADH + H(+). In terms of biological role, catalyzes the reversible oxidation of malate to oxaloacetate. The sequence is that of Malate dehydrogenase from Thermus thermophilus (strain ATCC BAA-163 / DSM 7039 / HB27).